A 155-amino-acid polypeptide reads, in one-letter code: Interleukin-2 (155 aa).

The first 20 residues, 1 to 20, serve as a signal peptide directing secretion; that stretch reads MYKIQLLSCIALTLALVANG. T23 carries O-linked (GalNAc...) threonine glycosylation. The cysteines at positions 79 and 127 are disulfide-linked.

This sequence belongs to the IL-2 family.

It localises to the secreted. Functionally, cytokine produced by activated CD4-positive helper T-cells and to a lesser extend activated CD8-positive T-cells and natural killer (NK) cells that plays pivotal roles in the immune response and tolerance. Binds to a receptor complex composed of either the high-affinity trimeric IL-2R (IL2RA/CD25, IL2RB/CD122 and IL2RG/CD132) or the low-affinity dimeric IL-2R (IL2RB and IL2RG). Interaction with the receptor leads to oligomerization and conformation changes in the IL-2R subunits resulting in downstream signaling starting with phosphorylation of JAK1 and JAK3. In turn, JAK1 and JAK3 phosphorylate the receptor to form a docking site leading to the phosphorylation of several substrates including STAT5. This process leads to activation of several pathways including STAT, phosphoinositide-3-kinase/PI3K and mitogen-activated protein kinase/MAPK pathways. Functions as a T-cell growth factor and can increase NK-cell cytolytic activity as well. Promotes strong proliferation of activated B-cells and subsequently immunoglobulin production. Plays a pivotal role in regulating the adaptive immune system by controlling the survival and proliferation of regulatory T-cells, which are required for the maintenance of immune tolerance. Moreover, participates in the differentiation and homeostasis of effector T-cell subsets, including Th1, Th2, Th17 as well as memory CD8-positive T-cells. The protein is Interleukin-2 (IL2) of Boselaphus tragocamelus (Nilgai).